The primary structure comprises 365 residues: tRNA/tmRNA (uracil-C(5))-methyltransferase (365 aa).

Residues Q189, Y217, N222, E238, and D298 each coordinate S-adenosyl-L-methionine. C323 functions as the Nucleophile in the catalytic mechanism. The Proton acceptor role is filled by E357.

It belongs to the class I-like SAM-binding methyltransferase superfamily. RNA M5U methyltransferase family. TrmA subfamily.

It carries out the reaction uridine(54) in tRNA + S-adenosyl-L-methionine = 5-methyluridine(54) in tRNA + S-adenosyl-L-homocysteine + H(+). The enzyme catalyses uridine(341) in tmRNA + S-adenosyl-L-methionine = 5-methyluridine(341) in tmRNA + S-adenosyl-L-homocysteine + H(+). Functionally, dual-specificity methyltransferase that catalyzes the formation of 5-methyluridine at position 54 (m5U54) in all tRNAs, and that of position 341 (m5U341) in tmRNA (transfer-mRNA). This Shewanella denitrificans (strain OS217 / ATCC BAA-1090 / DSM 15013) protein is tRNA/tmRNA (uracil-C(5))-methyltransferase.